Consider the following 443-residue polypeptide: ATP-dependent protease ATPase subunit HslU (443 aa).

ATP contacts are provided by residues isoleucine 18, glycine 60–glutamate 65, aspartate 256, glutamate 321, and arginine 393.

Belongs to the ClpX chaperone family. HslU subfamily. In terms of assembly, a double ring-shaped homohexamer of HslV is capped on each side by a ring-shaped HslU homohexamer. The assembly of the HslU/HslV complex is dependent on binding of ATP.

Its subcellular location is the cytoplasm. ATPase subunit of a proteasome-like degradation complex; this subunit has chaperone activity. The binding of ATP and its subsequent hydrolysis by HslU are essential for unfolding of protein substrates subsequently hydrolyzed by HslV. HslU recognizes the N-terminal part of its protein substrates and unfolds these before they are guided to HslV for hydrolysis. This Tolumonas auensis (strain DSM 9187 / NBRC 110442 / TA 4) protein is ATP-dependent protease ATPase subunit HslU.